A 66-amino-acid polypeptide reads, in one-letter code: Large ribosomal subunit protein bL33c (66 aa).

Belongs to the bacterial ribosomal protein bL33 family.

The protein resides in the plastid. It localises to the chloroplast. This is Large ribosomal subunit protein bL33c from Physcomitrium patens (Spreading-leaved earth moss).